Consider the following 118-residue polypeptide: Small ribosomal subunit protein uS13 (118 aa).

The tract at residues 91–118 (HRRSLPLRGQRTKNNARTRKGPKKPIKR) is disordered.

Belongs to the universal ribosomal protein uS13 family. As to quaternary structure, part of the 30S ribosomal subunit. Forms a loose heterodimer with protein S19. Forms two bridges to the 50S subunit in the 70S ribosome.

Functionally, located at the top of the head of the 30S subunit, it contacts several helices of the 16S rRNA. In the 70S ribosome it contacts the 23S rRNA (bridge B1a) and protein L5 of the 50S subunit (bridge B1b), connecting the 2 subunits; these bridges are implicated in subunit movement. Contacts the tRNAs in the A and P-sites. In Hydrogenovibrio crunogenus (strain DSM 25203 / XCL-2) (Thiomicrospira crunogena), this protein is Small ribosomal subunit protein uS13.